A 105-amino-acid polypeptide reads, in one-letter code: MKNKIKIRLKSFDHRSLDQATKEIVSAVKRTFATINGPIPLPRKIERFTVNRSPHVHKKSREQFEIRKHKRLLVIDDPNPAVVDALSKVDLAAGVDVVIELENGE.

Belongs to the universal ribosomal protein uS10 family. In terms of assembly, part of the 30S ribosomal subunit.

Functionally, involved in the binding of tRNA to the ribosomes. In Rickettsia typhi (strain ATCC VR-144 / Wilmington), this protein is Small ribosomal subunit protein uS10.